The sequence spans 153 residues: MNVGVAHSEVNPNTRVMNSRGMWLTYALGVGMLHIVLLSIPFFSVPVAWTLTNVIHNLGMYVFLHAVKGTPFETPDQGKARLLTHWEQLDYGVQFTSSRKFLTISPIILYFLASFYTKYDPTHFFINTASLLSVLIPKLPQLHGVRIFGINKY.

At 1–26 (MNVGVAHSEVNPNTRVMNSRGMWLTY) the chain is on the cytoplasmic side. Helical transmembrane passes span 27–46 (ALGV…FSVP) and 47–67 (VAWT…LHAV). Residues 68–100 (KGTPFETPDQGKARLLTHWEQLDYGVQFTSSRK) are Cytoplasmic-facing. A helical transmembrane segment spans residues 101–121 (FLTISPIILYFLASFYTKYDP). Topologically, residues 122-123 (TH) are extracellular. A helical membrane pass occupies residues 124 to 144 (FFINTASLLSVLIPKLPQLHG). The Cytoplasmic portion of the chain corresponds to 145-153 (VRIFGINKY).

This sequence belongs to the ORM family. In terms of assembly, ceramide-sensitive subunit of the serine palmitoyltransferase (SPT) complex, which is also composed of SPTLC1, SPTLC2/3 and SPTSSA/B.

Its subcellular location is the endoplasmic reticulum membrane. In terms of biological role, plays an essential role in the homeostatic regulation of sphingolipid de novo biosynthesis by modulating the activity of the serine palmitoyltransferase (SPT) in response to ceramide levels. When complexed to SPT, the binding of ceramides to its N-terminus stabilizes a conformation that block SPT substrate entry, hence preventing SPT catalytic activity. Through this mechanism, maintains ceramide levels at sufficient concentrations for the production of complex sphingolipids, but which prevents the accumulation of ceramides to levels that trigger apoptosis. This is ORM1-like protein 1 (ormdl1) from Xenopus laevis (African clawed frog).